Reading from the N-terminus, the 344-residue chain is Protein Tob2 (344 aa).

2 disordered regions span residues 144-169 (GSQD…FIPR) and 191-225 (MKKG…SPTN). Positions 145–164 (SQDSSLSNSPSPSFGQSPSP) are enriched in low complexity. Over residues 194–210 (GGGAASGGGVASSGAGG) the composition is skewed to gly residues. Low complexity predominate over residues 211–225 (QQPPQQPRMARSPTN). The residue at position 254 (serine 254) is a Phosphoserine.

It belongs to the BTG family. Associates with CAF1. Ubiquitous.

The protein localises to the cytoplasm. Its function is as follows. Anti-proliferative protein inhibits cell cycle progression from the G0/G1 to S phases. The protein is Protein Tob2 (TOB2) of Homo sapiens (Human).